Consider the following 77-residue polypeptide: Acyl carrier protein (77 aa).

A Carrier domain is found at 2-77 (ADTLERVTKI…DAVNYIQNQQ (76 aa)). S37 carries the post-translational modification O-(pantetheine 4'-phosphoryl)serine.

Belongs to the acyl carrier protein (ACP) family. In terms of processing, 4'-phosphopantetheine is transferred from CoA to a specific serine of apo-ACP by AcpS. This modification is essential for activity because fatty acids are bound in thioester linkage to the sulfhydryl of the prosthetic group.

The protein resides in the cytoplasm. It participates in lipid metabolism; fatty acid biosynthesis. Its function is as follows. Carrier of the growing fatty acid chain in fatty acid biosynthesis. This chain is Acyl carrier protein (acpA), found in Bacillus subtilis (strain 168).